A 490-amino-acid polypeptide reads, in one-letter code: Glutamyl-tRNA(Gln) amidotransferase subunit A (490 aa).

Residues K76 and S151 each act as charge relay system in the active site. S175 serves as the catalytic Acyl-ester intermediate.

This sequence belongs to the amidase family. GatA subfamily. As to quaternary structure, heterotrimer of A, B and C subunits.

The enzyme catalyses L-glutamyl-tRNA(Gln) + L-glutamine + ATP + H2O = L-glutaminyl-tRNA(Gln) + L-glutamate + ADP + phosphate + H(+). Its function is as follows. Allows the formation of correctly charged Gln-tRNA(Gln) through the transamidation of misacylated Glu-tRNA(Gln) in organisms which lack glutaminyl-tRNA synthetase. The reaction takes place in the presence of glutamine and ATP through an activated gamma-phospho-Glu-tRNA(Gln). The chain is Glutamyl-tRNA(Gln) amidotransferase subunit A from Methylobacillus flagellatus (strain ATCC 51484 / DSM 6875 / VKM B-1610 / KT).